Consider the following 87-residue polypeptide: Cell division topological specificity factor (87 aa).

Belongs to the MinE family.

Its function is as follows. Prevents the cell division inhibition by proteins MinC and MinD at internal division sites while permitting inhibition at polar sites. This ensures cell division at the proper site by restricting the formation of a division septum at the midpoint of the long axis of the cell. This Blochmanniella pennsylvanica (strain BPEN) protein is Cell division topological specificity factor.